A 336-amino-acid chain; its full sequence is MAQMSMTVEKSIKADVTVSHDRVKRAYVTFLAGNKDYWMGVVGLAKGLRKVKSAYPLVVAILPDVPEEHRQILLAQGCIIREIEPVYPPENKTGYSMAYYVINYSKLRIWEFVEYEKMIYLDGDIQVFSNIDHLFDTPRGYLYAVKDCFCEISWSKTPQFKIGYCQQCPEKVTWPVESLGSPPPVYFNAGMLVFEPNLLTYEDLLRVVQITTPTYFAEQDFLNEYFTDIYKPIPSTYNLVMAMLWRHPEHIDLDQISVIHYCANGSKPWRFDETEEHMDREDIKMLVKKWWDIYEDSSLDYKNFVETESKLSPINATLASKESVGDVLISLAPSAA.

The active site involves Lys-106. Positions 122, 124, and 260 each coordinate Mn(2+).

This sequence belongs to the glycosyltransferase 8 family. Galactosyltransferase subfamily. A divalent metal cation serves as cofactor.

The protein resides in the cytoplasm. It catalyses the reaction myo-inositol + UDP-alpha-D-galactose = alpha-D-galactosyl-(1-&gt;3)-1D-myo-inositol + UDP + H(+). Galactinol synthase involved in the biosynthesis of raffinose family oligosaccharides (RFOs) that function as osmoprotectants. May promote plant stress tolerance. The polypeptide is Galactinol synthase 6 (GOLS6) (Arabidopsis thaliana (Mouse-ear cress)).